A 76-amino-acid chain; its full sequence is MVFEKIKALIATQLSLDASTITLDTRFKEDLGLDSLDALELVMEVEKTFQINISDATLQNFKTVQDIVFYITKNTP.

The Carrier domain maps to 1–75 (MVFEKIKALI…DIVFYITKNT (75 aa)). O-(pantetheine 4'-phosphoryl)serine is present on S35.

Belongs to the acyl carrier protein (ACP) family. 4'-phosphopantetheine is transferred from CoA to a specific serine of apo-ACP by AcpS. This modification is essential for activity because fatty acids are bound in thioester linkage to the sulfhydryl of the prosthetic group.

The protein resides in the cytoplasm. The protein operates within lipid metabolism; fatty acid biosynthesis. Carrier of the growing fatty acid chain in fatty acid biosynthesis. The chain is Acyl carrier protein from Onion yellows phytoplasma (strain OY-M).